Here is a 517-residue protein sequence, read N- to C-terminus: Crotonobetaine/carnitine--CoA ligase (517 aa).

Belongs to the ATP-dependent AMP-binding enzyme family.

The enzyme catalyses 4-(trimethylamino)butanoate + ATP + CoA = 4-(trimethylamino)butanoyl-CoA + AMP + diphosphate. It carries out the reaction crotonobetaine + ATP + CoA = crotonobetainyl-CoA + AMP + diphosphate. It catalyses the reaction (R)-carnitine + ATP + CoA = (R)-carnitinyl-CoA + AMP + diphosphate. The protein operates within amine and polyamine metabolism; carnitine metabolism. Its function is as follows. Catalyzes the transfer of CoA to carnitine, generating the initial carnitinyl-CoA needed for the CaiB reaction cycle. Also has activity toward crotonobetaine and gamma-butyrobetaine. This Escherichia coli O45:K1 (strain S88 / ExPEC) protein is Crotonobetaine/carnitine--CoA ligase.